Reading from the N-terminus, the 328-residue chain is Malate dehydrogenase (328 aa).

An NAD(+)-binding site is contributed by 11 to 17 (GAAGQIG). Substrate contacts are provided by Arg-94 and Arg-100. Residues Asn-107, Gln-114, and 131–133 (VGN) contribute to the NAD(+) site. Substrate contacts are provided by Asn-133 and Arg-164. Catalysis depends on His-189, which acts as the Proton acceptor.

It belongs to the LDH/MDH superfamily. MDH type 2 family.

The catalysed reaction is (S)-malate + NAD(+) = oxaloacetate + NADH + H(+). Its function is as follows. Catalyzes the reversible oxidation of malate to oxaloacetate. This chain is Malate dehydrogenase, found in Xanthomonas campestris pv. campestris (strain 8004).